The primary structure comprises 251 residues: uncharacterized protein (251 aa).

Helical transmembrane passes span 48-68 (WMVG…VELI), 88-108 (VLWG…LVAN), 110-130 (IPLL…FIWV), 132-152 (AMVW…GSSF), 158-178 (IGVS…GLFV), 184-204 (IIGC…MPVL), and 209-229 (GVSW…AYLL).

To M.tuberculosis Rv1337.

Its subcellular location is the cell membrane. This is an uncharacterized protein from Mycobacterium leprae (strain TN).